The chain runs to 810 residues: Volume-regulated anion channel subunit LRRC8A (810 aa).

The residue at position 1 (Met-1) is an N-acetylmethionine. Residues 1-23 (MIPVTELRYFADTQPAYRILKPW) are Cytoplasmic-facing. Residues 24 to 47 (WDVFTDYISIVMLMIAVFGGTLQV) traverse the membrane as a helical segment. The Extracellular portion of the chain corresponds to 48–123 (TQDKMICLPC…YENRLHWFAK (76 aa)). Disulfide bonds link Cys-54–Cys-310, Cys-57–Cys-65, and Cys-113–Cys-295. 2 N-linked (GlcNAc...) asparagine glycosylation sites follow: Asn-66 and Asn-83. Residues 124 to 142 (YFPYLVLLHTLIFLACSNF) traverse the membrane as a helical segment. Topologically, residues 143–264 (WFKFPRTSSK…EEGDIVYRLY (122 aa)) are cytoplasmic. Thr-200 bears the Phosphothreonine mark. Position 202 is a phosphoserine (Ser-202). At Thr-215 the chain carries Phosphothreonine. Residue Ser-217 is modified to Phosphoserine. A helical transmembrane segment spans residues 265 to 286 (MRQTIIKVIKFILIICYTVYYV). Residues 287 to 316 (HNIKFDVDCTVDIESLTGYRTYRCAHPLAT) lie on the Extracellular side of the membrane. A helical membrane pass occupies residues 317–341 (LFKILASFYISLVIFYGLICMYTLW). Residues 342–810 (WMLRRSLKKY…RLWRADKEQA (469 aa)) are Cytoplasmic-facing. LRR repeat units lie at residues 399-422 (ENKL…RLTK), 423-445 (NAQD…VFDL), 447-468 (ELEV…IAQL), 469-492 (TGLK…AFLR), 493-515 (ENLR…IYSL), 518-542 (LEEL…GLRE), 543-565 (LKRL…VTDV), 567-589 (VHLQ…SLKK), 590-613 (MANL…IFSL), 615-637 (NLQE…SFQH), 639-661 (HRLT…IGNL), 662-684 (TNLE…LFYC), 686-707 (KLRY…IGLL), 708-730 (QNLQ…LFQC), 732-753 (KLRA…VGEL), 754-776 (TNLT…LGEC), and 778-801 (LLKR…VKER). Residues 706 to 707 (LL) carry the Di-leucine motif motif.

Belongs to the LRRC8 family. In terms of assembly, heterohexamer; oligomerizes with other LRRC8 proteins (LRRC8B, LRRC8C, LRRC8D and/or LRRC8E) to form a heterohexamer. Can form homohexamers in vitro, but these have lower conductance than heterohexamers. In vivo, the subunit composition may depend primarily on expression levels, and heterooligomeric channels containing various proportions of the different LRRC8 proteins may coexist. Interact with GRB2. Interacts with NOX4; this interaction prevents the ubiquitin-mediated degradation of LRRC8A. In terms of processing, N-glycosylated. Expressed in brain, kidney, ovary, lung, liver, heart, and fetal brain and liver. Found at high levels in bone marrow; lower levels are detected in peripheral blood cells. Expressed on T-cells as well as on B-lineage cells.

It localises to the cell membrane. The protein localises to the lysosome membrane. The catalysed reaction is chloride(in) = chloride(out). It catalyses the reaction iodide(out) = iodide(in). It carries out the reaction taurine(out) = taurine(in). The enzyme catalyses L-aspartate(out) = L-aspartate(in). The catalysed reaction is L-glutamate(out) = L-glutamate(in). It catalyses the reaction myo-inositol(out) = myo-inositol(in). It carries out the reaction 2',3'-cGAMP(out) = 2',3'-cGAMP(in). Inhibited by (4-[(2-butyl-6,7-dichloro-2-cyclopentyl-2,3-dihydro-1-oxo-1H-inden-5-yl)oxy]butanoic acid), which plugs the channel like a cork in a bottle by binding in the extracellular selectivity filter and sterically occluding ion conduction. Lipids may block conduction in closed heterohexameric channels. Its function is as follows. Essential component of the volume-regulated anion channel (VRAC, also named VSOAC channel), an anion channel required to maintain a constant cell volume in response to extracellular or intracellular osmotic changes. The VRAC channel conducts iodide better than chloride and can also conduct organic osmolytes like taurine. Mediates efflux of amino acids, such as aspartate and glutamate, in response to osmotic stress. LRRC8A and LRRC8D are required for the uptake of the drug cisplatin. In complex with LRRC8C or LRRC8E, acts as a transporter of immunoreactive cyclic dinucleotide GMP-AMP (2'-3'-cGAMP), an immune messenger produced in response to DNA virus in the cytosol: mediates both import and export of 2'-3'-cGAMP, thereby promoting transfer of 2'-3'-cGAMP to bystander cells. In contrast, complexes containing LRRC8D inhibit transport of 2'-3'-cGAMP. Required for in vivo channel activity, together with at least one other family member (LRRC8B, LRRC8C, LRRC8D or LRRC8E); channel characteristics depend on the precise subunit composition. Can form functional channels by itself (in vitro). Involved in B-cell development: required for the pro-B cell to pre-B cell transition. Also required for T-cell development. Required for myoblast differentiation: VRAC activity promotes membrane hyperpolarization and regulates insulin-stimulated glucose metabolism and oxygen consumption. Also acts as a regulator of glucose-sensing in pancreatic beta cells: VRAC currents, generated in response to hypotonicity- or glucose-induced beta cell swelling, depolarize cells, thereby causing electrical excitation, leading to increase glucose sensitivity and insulin secretion. Also plays a role in lysosome homeostasis by forming functional lysosomal VRAC channels in response to low cytoplasmic ionic strength condition: lysosomal VRAC channels are necessary for the formation of large lysosome-derived vacuoles, which store and then expel excess water to maintain cytosolic water homeostasis. Acts as a key factor in NLRP3 inflammasome activation by modulating itaconate efflux and mitochondria function. This is Volume-regulated anion channel subunit LRRC8A from Homo sapiens (Human).